The primary structure comprises 243 residues: UDP-2,3-diacylglucosamine hydrolase (243 aa).

Positions 9, 11, 42, 79, and 114 each coordinate Mn(2+). 79 to 80 is a binding site for substrate; it reads NR. Residues aspartate 122, serine 160, asparagine 164, and histidine 195 each contribute to the substrate site. Residues histidine 195 and histidine 197 each contribute to the Mn(2+) site.

The protein belongs to the LpxH family. It depends on Mn(2+) as a cofactor.

The protein resides in the cell inner membrane. The enzyme catalyses UDP-2-N,3-O-bis[(3R)-3-hydroxytetradecanoyl]-alpha-D-glucosamine + H2O = 2-N,3-O-bis[(3R)-3-hydroxytetradecanoyl]-alpha-D-glucosaminyl 1-phosphate + UMP + 2 H(+). It functions in the pathway glycolipid biosynthesis; lipid IV(A) biosynthesis; lipid IV(A) from (3R)-3-hydroxytetradecanoyl-[acyl-carrier-protein] and UDP-N-acetyl-alpha-D-glucosamine: step 4/6. Functionally, hydrolyzes the pyrophosphate bond of UDP-2,3-diacylglucosamine to yield 2,3-diacylglucosamine 1-phosphate (lipid X) and UMP by catalyzing the attack of water at the alpha-P atom. Involved in the biosynthesis of lipid A, a phosphorylated glycolipid that anchors the lipopolysaccharide to the outer membrane of the cell. In Coxiella burnetii (strain RSA 331 / Henzerling II), this protein is UDP-2,3-diacylglucosamine hydrolase.